The chain runs to 139 residues: MPSTPSKTLETFPNPKPGRDFHIHMEVPEFTCLCPKTGQPDFATLVLDYIPNQACVELKSLKLYMWSFRDEGHFHEDVTNRILDDLVAATDPRYMRLTAKFYVRGGIFTNVVAEHRKDGWQPAPRVDLTQFEHQSNTRG.

Residue Cys-34 is the Thioimide intermediate of the active site. The Proton donor role is filled by Asp-41. Residues 56-58 (VEL) and 75-76 (HE) each bind substrate.

The protein belongs to the GTP cyclohydrolase I family. QueF type 1 subfamily.

The protein resides in the cytoplasm. The catalysed reaction is 7-aminomethyl-7-carbaguanine + 2 NADP(+) = 7-cyano-7-deazaguanine + 2 NADPH + 3 H(+). Its pathway is tRNA modification; tRNA-queuosine biosynthesis. Catalyzes the NADPH-dependent reduction of 7-cyano-7-deazaguanine (preQ0) to 7-aminomethyl-7-deazaguanine (preQ1). The polypeptide is NADPH-dependent 7-cyano-7-deazaguanine reductase (Thiobacillus denitrificans (strain ATCC 25259 / T1)).